A 212-amino-acid polypeptide reads, in one-letter code: Glutathione S-transferase (212 aa).

The GST N-terminal domain maps to 1–82 (MGMKLHGPAM…YIAHTYADKG (82 aa)). Glutathione is bound by residues Ser11, 12-13 (PA), 40-41 (HK), 53-54 (QV), and 66-67 (ES). Residues 89 to 212 (DPKKMAIMSV…AWSKAIEYKQ (124 aa)) form the GST C-terminal domain.

The protein belongs to the GST superfamily. Phi family.

It carries out the reaction RX + glutathione = an S-substituted glutathione + a halide anion + H(+). Functionally, conjugation of reduced glutathione to a wide number of exogenous and endogenous hydrophobic electrophiles. This is Glutathione S-transferase from Hyoscyamus muticus (Egyptian henbane).